A 500-amino-acid polypeptide reads, in one-letter code: Na(+)/H(+) antiporter NhaB (500 aa).

The next 12 helical transmembrane spans lie at 28-50 (FLLL…VLVG), 68-88 (GGLL…ALYA), 98-118 (LLLM…LLLF), 121-141 (LLLG…LAAL), 145-165 (FLDA…FFAV), 205-225 (LLMH…VGEP), 244-264 (QVAP…VLLE), 311-331 (VLIV…LLVI), 350-370 (FQEA…VAVI), 394-414 (MLFI…VATI), 449-469 (VATP…IAPL), and 477-497 (MVWM…WAVS).

Belongs to the NhaB Na(+)/H(+) (TC 2.A.34) antiporter family.

The protein resides in the cell inner membrane. The enzyme catalyses 2 Na(+)(in) + 3 H(+)(out) = 2 Na(+)(out) + 3 H(+)(in). Functionally, na(+)/H(+) antiporter that extrudes sodium in exchange for external protons. This is Na(+)/H(+) antiporter NhaB from Pseudomonas aeruginosa (strain UCBPP-PA14).